A 380-amino-acid polypeptide reads, in one-letter code: Cystathionine beta-lyase (380 aa).

An N6-(pyridoxal phosphate)lysine modification is found at Lys196.

Belongs to the trans-sulfuration enzymes family. The cofactor is pyridoxal 5'-phosphate.

The protein localises to the cytoplasm. The catalysed reaction is L,L-cystathionine + H2O = L-homocysteine + pyruvate + NH4(+). The enzyme catalyses an S-substituted L-cysteine + H2O = a thiol + pyruvate + NH4(+). It functions in the pathway amino-acid biosynthesis; L-methionine biosynthesis via de novo pathway; L-homocysteine from L-cystathionine: step 1/1. The enzymatic degradation of amino acids in cheese is believed to generate aroma compounds and therefore to be essential for flavor development. Cystathionine beta-lyase (CBL) can convert cystathionine to homocysteine but is also able to catalyze an alpha, gamma elimination. With methionine as a substrate, it produces volatile sulfur compounds which are important for flavor formation in Gouda cheese. The polypeptide is Cystathionine beta-lyase (metC) (Lactococcus lactis subsp. cremoris (Streptococcus cremoris)).